The following is a 251-amino-acid chain: Dehydration-responsive element-binding protein 1I (251 aa).

The tract at residues 1–50 is disordered; sequence MCTSKLEEITGEWPPPALQAASTTSSSEPCRRLSPPSSKRPAGRTKFHET. A DNA-binding region (AP2/ERF) is located at residues 54-114; sequence VFRGVRRRGR…GRAAACLNFA (61 aa). Residues 169-198 form a disordered region; sequence ATSEPSAASDDDAVTSSSSTTDADEEASPF.

This sequence belongs to the AP2/ERF transcription factor family. ERF subfamily.

The protein resides in the nucleus. Its function is as follows. Transcriptional activator that binds specifically to the DNA sequence 5'-[AG]CCGAC-3'. Binding to the C-repeat/DRE element mediates high salinity- and dehydration-inducible transcription. This chain is Dehydration-responsive element-binding protein 1I (DREB1I), found in Oryza sativa subsp. japonica (Rice).